Consider the following 245-residue polypeptide: 1-(5-phosphoribosyl)-5-[(5-phosphoribosylamino)methylideneamino] imidazole-4-carboxamide isomerase (245 aa).

Residue aspartate 7 is the Proton acceptor of the active site. Aspartate 129 acts as the Proton donor in catalysis.

The protein belongs to the HisA/HisF family.

It is found in the cytoplasm. The catalysed reaction is 1-(5-phospho-beta-D-ribosyl)-5-[(5-phospho-beta-D-ribosylamino)methylideneamino]imidazole-4-carboxamide = 5-[(5-phospho-1-deoxy-D-ribulos-1-ylimino)methylamino]-1-(5-phospho-beta-D-ribosyl)imidazole-4-carboxamide. It functions in the pathway amino-acid biosynthesis; L-histidine biosynthesis; L-histidine from 5-phospho-alpha-D-ribose 1-diphosphate: step 4/9. The sequence is that of 1-(5-phosphoribosyl)-5-[(5-phosphoribosylamino)methylideneamino] imidazole-4-carboxamide isomerase from Aliivibrio fischeri (strain MJ11) (Vibrio fischeri).